We begin with the raw amino-acid sequence, 72 residues long: General transcription factor IIH subunit 5 (72 aa).

Belongs to the TFB5 family. Component of the 7-subunit TFIIH core complex composed of XPB/repB, XPD/repD, gtf2h1, gtf2h2, gtf2h3, gtf2h4 and gtf2h5, which is active in NER. The core complex associates with the 3-subunit CDK-activating kinase (CAK) module composed of cycH/cyclin H, cdk7 and mnat1 to form the 10-subunit holoenzyme (holo-TFIIH) active in transcription.

It is found in the nucleus. Component of the general transcription and DNA repair factor IIH (TFIIH) core complex, which is involved in general and transcription-coupled nucleotide excision repair (NER) of damaged DNA and, when complexed to CAK, in RNA transcription by RNA polymerase II. In NER, TFIIH acts by opening DNA around the lesion to allow the excision of the damaged oligonucleotide and its replacement by a new DNA fragment. In transcription, TFIIH has an essential role in transcription initiation. When the pre-initiation complex (PIC) has been established, TFIIH is required for promoter opening and promoter escape. Phosphorylation of the C-terminal tail (CTD) of the largest subunit of RNA polymerase II by the kinase module CAK controls the initiation of transcription. This chain is General transcription factor IIH subunit 5 (gtf2h5), found in Dictyostelium discoideum (Social amoeba).